The following is a 444-amino-acid chain: C4-dicarboxylate transport protein 3 (444 aa).

9 consecutive transmembrane segments (helical) span residues 22 to 42 (VLYV…WLWP), 60 to 80 (LIKM…IAHI), 95 to 115 (VYFE…GNLV), 162 to 182 (GEIL…MSLG), 198 to 218 (AVFG…FGAM), 236 to 256 (LIAT…GIIA), 321 to 341 (IYMT…LSFG), 346 to 366 (ILVV…AGFI), and 399 to 419 (LTNL…EGEL).

This sequence belongs to the dicarboxylate/amino acid:cation symporter (DAACS) (TC 2.A.23) family.

It is found in the cell inner membrane. In terms of biological role, responsible for the transport of dicarboxylates such as succinate, fumarate, and malate from the periplasm across the membrane. This chain is C4-dicarboxylate transport protein 3, found in Bradyrhizobium diazoefficiens (strain JCM 10833 / BCRC 13528 / IAM 13628 / NBRC 14792 / USDA 110).